The primary structure comprises 296 residues: Formamidopyrimidine-DNA glycosylase (296 aa).

Residue P2 is the Schiff-base intermediate with DNA of the active site. E3 functions as the Proton donor in the catalytic mechanism. K61 functions as the Proton donor; for beta-elimination activity in the catalytic mechanism. Residues H104, R128, and K174 each contribute to the DNA site. An FPG-type zinc finger spans residues 260–294; sequence HAYGQQGQACDRCGSNIIREKFANRSSHFCPRCQL. R284 serves as the catalytic Proton donor; for delta-elimination activity.

It belongs to the FPG family. In terms of assembly, monomer. It depends on Zn(2+) as a cofactor.

The enzyme catalyses Hydrolysis of DNA containing ring-opened 7-methylguanine residues, releasing 2,6-diamino-4-hydroxy-5-(N-methyl)formamidopyrimidine.. It catalyses the reaction 2'-deoxyribonucleotide-(2'-deoxyribose 5'-phosphate)-2'-deoxyribonucleotide-DNA = a 3'-end 2'-deoxyribonucleotide-(2,3-dehydro-2,3-deoxyribose 5'-phosphate)-DNA + a 5'-end 5'-phospho-2'-deoxyribonucleoside-DNA + H(+). Its function is as follows. Involved in base excision repair of DNA damaged by oxidation or by mutagenic agents. Acts as a DNA glycosylase that recognizes and removes damaged bases. Has a preference for oxidized purines, such as 7,8-dihydro-8-oxoguanine (8-oxoG). Has AP (apurinic/apyrimidinic) lyase activity and introduces nicks in the DNA strand. Cleaves the DNA backbone by beta-delta elimination to generate a single-strand break at the site of the removed base with both 3'- and 5'-phosphates. In Corynebacterium diphtheriae (strain ATCC 700971 / NCTC 13129 / Biotype gravis), this protein is Formamidopyrimidine-DNA glycosylase.